The chain runs to 129 residues: Phosphoribosyl-AMP cyclohydrolase (129 aa).

Residue D85 coordinates Mg(2+). C86 serves as a coordination point for Zn(2+). Residues D87 and D89 each coordinate Mg(2+). Positions 102 and 109 each coordinate Zn(2+).

Belongs to the PRA-CH family. As to quaternary structure, homodimer. The cofactor is Mg(2+). Zn(2+) serves as cofactor.

Its subcellular location is the cytoplasm. The catalysed reaction is 1-(5-phospho-beta-D-ribosyl)-5'-AMP + H2O = 1-(5-phospho-beta-D-ribosyl)-5-[(5-phospho-beta-D-ribosylamino)methylideneamino]imidazole-4-carboxamide. The protein operates within amino-acid biosynthesis; L-histidine biosynthesis; L-histidine from 5-phospho-alpha-D-ribose 1-diphosphate: step 3/9. In terms of biological role, catalyzes the hydrolysis of the adenine ring of phosphoribosyl-AMP. The chain is Phosphoribosyl-AMP cyclohydrolase from Methanococcus maripaludis (strain C5 / ATCC BAA-1333).